Consider the following 372-residue polypeptide: MDSAIQSAKRIIIKVGSSLVTNDGKGLDTAAIQKWAEQIVQLRALGKEVVLVSSGAIAEGMQRLGFDKRPTGVHELQACAAVGQMGLAQIYETSFRQHQVQTAQILLTHADLADRERYLNARSTLFTLLQLGVVPIINENDTVVTDEIKFGDNDTLGALVANLIEADALIILTDQRGLFSADPRKDPHATFIHEAQAGDVELEAMAGGAGSSLGRGGMLTKILAAKRAALSGAHTVIAWGREEQVLTRLAAGEAIGTQLTAQTAQLTARKQWMADHLHTAGRIVLDQGAVLKLTAEGKSLLPIGVIEVSGSFGRGDVITCVDQSGRAIARGITNYTSSEARRIMRKPSTDILSILGFVEEPELIHRDNLVLL.

Lysine 14 lines the ATP pocket. The substrate site is built by serine 54, aspartate 141, and asparagine 153. 173–174 (TD) contributes to the ATP binding site. Residues 280–358 (AGRIVLDQGA…TDILSILGFV (79 aa)) enclose the PUA domain.

The protein belongs to the glutamate 5-kinase family.

It is found in the cytoplasm. The enzyme catalyses L-glutamate + ATP = L-glutamyl 5-phosphate + ADP. It functions in the pathway amino-acid biosynthesis; L-proline biosynthesis; L-glutamate 5-semialdehyde from L-glutamate: step 1/2. In terms of biological role, catalyzes the transfer of a phosphate group to glutamate to form L-glutamate 5-phosphate. The sequence is that of Glutamate 5-kinase from Herminiimonas arsenicoxydans.